We begin with the raw amino-acid sequence, 71 residues long: Large ribosomal subunit protein uL30 (71 aa).

The protein belongs to the universal ribosomal protein uL30 family. As to quaternary structure, part of the 50S ribosomal subunit.

The polypeptide is Large ribosomal subunit protein uL30 (Mycolicibacterium paratuberculosis (strain ATCC BAA-968 / K-10) (Mycobacterium paratuberculosis)).